Reading from the N-terminus, the 303-residue chain is Zinc transporter ZIP9-B (303 aa).

A helical membrane pass occupies residues I7–A27. N29 carries N-linked (GlcNAc...) asparagine glycosylation. Helical transmembrane passes span L35–V55, A102–G122, I142–A162, L172–F192, and H206–S226. An N-linked (GlcNAc...) asparagine glycan is attached at N237. Helical transmembrane passes span G240–P260 and L282–Q302.

This sequence belongs to the ZIP transporter (TC 2.A.5) family.

Its subcellular location is the golgi apparatus. The protein resides in the trans-Golgi network membrane. It is found in the cell membrane. The protein localises to the cytoplasm. It localises to the perinuclear region. Its subcellular location is the mitochondrion. The protein resides in the nucleus. It carries out the reaction Zn(2+)(in) = Zn(2+)(out). Functionally, transports zinc ions across cell and organelle membranes into the cytoplasm and regulates intracellular zinc homeostasis. Participates in the zinc ions efflux out of the secretory compartments. Regulates intracellular zinc level, resulting in the enhancement of AKT1 and MAPK3/MAPK1 (Erk1/2) phosphorylation in response to the BCR activation. Also functions as a membrane androgen receptor that mediates, through a G protein, the non-classical androgen signaling pathway, characterized by the activation of MAPK3/MAPK1 (Erk1/2) and transcription factors CREB1 or ATF1. Moreover, has dual functions as a membrane-bound androgen receptor and as an androgen-dependent zinc transporter both of which are mediated through an inhibitory G protein (Gi) that mediates both MAP kinase and zinc signaling leading to the androgen-dependent apoptotic process. In Xenopus laevis (African clawed frog), this protein is Zinc transporter ZIP9-B (slc39a9-b).